The sequence spans 1083 residues: Centrosomal protein of 131 kDa (1083 aa).

2 disordered regions span residues 1–155 (MKGT…AGPR) and 220–258 (GSES…EVTE). The interaction with PLK4 stretch occupies residues 1–250 (MKGTRAIGSV…RNNTGGSTGL (250 aa)). S14 and S35 each carry phosphoserine. S47 is subject to Phosphoserine; by MAPKAPK2. Over residues 68–87 (QAINNLRRSNSTTQVSQPRS) the composition is skewed to polar residues. S78 carries the post-translational modification Phosphoserine; by MAPKAPK2 and PLK4. S89, S105, S114, S146, and S150 each carry phosphoserine. The segment covering 138-148 (LPSNARSSSAL) has biased composition (polar residues). A compositionally biased stretch (polar residues) spans 232-245 (NVSSATHSARNNTG). The region spanning 269–289 (NQATVTIQRWYRHQVQRRGAG) is the IQ domain. The segment at 301–429 (REEQRQRSGE…PQQPPEDRTQ (129 aa)) is disordered. Basic and acidic residues-rich tracts occupy residues 317 to 333 (HQQK…EKAR) and 360 to 369 (GPPENPRETR). S381 is subject to Phosphoserine. Phosphothreonine is present on T383. Phosphoserine occurs at positions 453, 489, 496, 499, 731, and 798. The segment covering 1047–1076 (KEEAVSSLRTQHEAAVKRADHLEELLEQHR) has biased composition (basic and acidic residues). The disordered stretch occupies residues 1047–1083 (KEEAVSSLRTQHEAAVKRADHLEELLEQHRRPTPSTK).

This sequence belongs to the CEP131 family. In terms of assembly, self-associates. Associates with the centriolar satellite BBSome protein complex. Interacts with BBS4; the interaction limits BBS4 availability for association with the BBSome complex, and hence negatively regulates ciliary localization of the BBSome complex. Interacts with MIB1. Interacts with PCM1; the interaction increases in response to ultraviolet light (UV) radiation. Associates with microtubules; association with microtubules is reduced in response to cellular stress, such as UV stimulation, in a process that requires p38 MAP kinase signaling. Interacts with CEP290, DCTN1, PCNT, PCM1 and CEP152. Interacts with 14-3-3 proteins following UV-induced phosphorylation by MAPKAPK2; this inhibits formation of novel centriolar satellites. Interacts with SDCCAG8. Interacts with CCDC61. Interacts with PLK4. In terms of processing, ubiquitinated. Undergoes monoubiquitination catalyzed by the E3 ubiquitin-protein ligase MIB1 in proliferating cells, preventing cilia formation. Monoubiquitination by MIB1 is inhibited in response to cellular stress, such as ultraviolet light (UV) radiation or heat shock, resulting in cilia formation initiation. MAPKAPK2-dependent phosphorylation at Ser-47 and Ser-78 occurs in response to cellular stress such as exposure to ultraviolet irradiation and promotes binding to 14-3-3 proteins which leads to cytoplasmic sequestration of CEP131 and blocks formation of new centriolar satellites. Phosphorylation at Ser-78 mediated by PLK4 is essential for proper organization and integrity of centriolar satellites but is dispensable for its localization to centrioles and its function in ciliogenesis.

It is found in the cytoplasm. Its subcellular location is the cytoskeleton. The protein resides in the microtubule organizing center. The protein localises to the centrosome. It localises to the centriolar satellite. It is found in the centriole. Its subcellular location is the cilium basal body. The protein resides in the cytoplasmic vesicle. The protein localises to the secretory vesicle. It localises to the acrosome. In terms of biological role, component of centriolar satellites contributing to the building of a complex and dynamic network required to regulate cilia/flagellum formation. In proliferating cells, MIB1-mediated ubiquitination induces its sequestration within centriolar satellites, precluding untimely cilia formation initiation. In contrast, during normal and ultraviolet or heat shock cellular stress-induced ciliogenesis, its non-ubiquitinated form is rapidly displaced from centriolar satellites and recruited to centrosome/basal bodies in a microtubule- and p38 MAPK-dependent manner. Also acts as a negative regulator of BBSome ciliary trafficking. Plays a role in sperm flagellar formation; may be involved in the regulation of intraflagellar transport (IFT) and/or intramanchette (IMT) trafficking, which are important for axoneme extension and/or cargo delivery to the nascent sperm tail. Required for optimal cell proliferation and cell cycle progression; may play a role in the regulation of genome stability in non-ciliogenic cells. Involved in centriole duplication. Required for CEP152, WDR62 and CEP63 centrosomal localization and promotes the centrosomal localization of CDK2. Essential for maintaining proper centriolar satellite integrity. The sequence is that of Centrosomal protein of 131 kDa (CEP131) from Homo sapiens (Human).